Reading from the N-terminus, the 1063-residue chain is Valine--tRNA ligase, mitochondrial (1063 aa).

A mitochondrion-targeting transit peptide spans 1-26; the sequence is MPHLPLASFRPPFWGLRHSRGLPRFH. The segment at 25 to 53 is disordered; the sequence is FHSVSTQSEPHGSPISRRNREAKQKRLRE. Basic and acidic residues predominate over residues 42-53; that stretch reads RNREAKQKRLRE. The 'HIGH' region signature appears at 146 to 156; the sequence is PNVTGSLHIGH. A 'KMSKS' region motif is present at residues 658 to 662; it reads KMSKS. Lysine 661 serves as a coordination point for ATP.

It belongs to the class-I aminoacyl-tRNA synthetase family.

The protein localises to the mitochondrion. It carries out the reaction tRNA(Val) + L-valine + ATP = L-valyl-tRNA(Val) + AMP + diphosphate. Catalyzes the attachment of valine to tRNA(Val) in a two-step reaction: valine is first activated by ATP to form Val-AMP and then transferred to the acceptor end of tRNA(Val). In Homo sapiens (Human), this protein is Valine--tRNA ligase, mitochondrial (VARS2).